A 230-amino-acid polypeptide reads, in one-letter code: UPF0173 metal-dependent hydrolase RHOS4_08540 (230 aa).

The protein belongs to the UPF0173 family.

This Cereibacter sphaeroides (strain ATCC 17023 / DSM 158 / JCM 6121 / CCUG 31486 / LMG 2827 / NBRC 12203 / NCIMB 8253 / ATH 2.4.1.) (Rhodobacter sphaeroides) protein is UPF0173 metal-dependent hydrolase RHOS4_08540.